We begin with the raw amino-acid sequence, 303 residues long: Elongation factor Ts (303 aa).

The tract at residues 79–82 is involved in Mg(2+) ion dislocation from EF-Tu; that stretch reads TDFV.

The protein belongs to the EF-Ts family.

The protein resides in the cytoplasm. Associates with the EF-Tu.GDP complex and induces the exchange of GDP to GTP. It remains bound to the aminoacyl-tRNA.EF-Tu.GTP complex up to the GTP hydrolysis stage on the ribosome. This is Elongation factor Ts from Syntrophotalea carbinolica (strain DSM 2380 / NBRC 103641 / GraBd1) (Pelobacter carbinolicus).